A 176-amino-acid polypeptide reads, in one-letter code: Secreted LysM effector ELP2 (176 aa).

Positions Met1–Ala18 are cleaved as a signal peptide. Low complexity predominate over residues Thr31–Ala45. Residues Thr31–Thr50 form a disordered region. Residues His58–Val102 form the LysM 1 domain. Asn111 carries an N-linked (GlcNAc...) asparagine glycan. Residues Ala129 to Val173 form the LysM 2 domain.

This sequence belongs to the secreted LysM effector family. Forms homodimers in a chitin-independent manner through interactions at the N-termini of EPL2 monomers. Homodimers are further polymerized in a chitin-dependent manner.

It is found in the secreted. Functionally, secreted effector that enables the plant pathogenic fungus to manipulate host defenses for successful infection. Binds chitin oligomers and polymer with high affinity and plays a dual role, not only in the suppression of chitin-triggered immune responses, but also in appressorium function. Does not protect fungal hyphae against plant chitinases but suppresses chitin-triggered plant immune responses. Chitin-induced polymerization of homodimers forms a contiguous ELP2 highly oligomeric super-complexe that may precipitate at infection sites to eliminate chitin oligomers, and thus suppress the activation of chitin-induced plant immunity. The protein is Secreted LysM effector ELP2 of Colletotrichum higginsianum (strain IMI 349063) (Crucifer anthracnose fungus).